We begin with the raw amino-acid sequence, 298 residues long: Riboflavin transporter (298 aa).

The next 9 membrane-spanning stretches (helical) occupy residues 8 to 28 (LQGA…NSVA), 35 to 55 (FGLP…VVIL), 79 to 99 (VFLA…PVPI), 101 to 121 (QGIA…GLWL), 125 to 145 (VGMA…IILE), 151 to 171 (FNLA…YSLM), 184 to 204 (MVVY…LPDW), 211 to 231 (TVWL…WAIA), and 258 to 278 (WLVF…IIVL). 2 EamA domains span residues 10 to 144 (GALW…MIIL) and 156 to 284 (LLPV…AFIT).

The protein belongs to the drug/metabolite transporter (DMT) superfamily. 10 TMS drug/metabolite exporter (DME) (TC 2.A.7.3) family.

Its subcellular location is the cell membrane. Its function is as follows. Transports riboflavin into the cell. The chain is Riboflavin transporter from Vibrio cholerae serotype O1 (strain ATCC 39315 / El Tor Inaba N16961).